The chain runs to 347 residues: MKLSCMLIEWALYVCPAVLLATQMSLAASLETLKCEGPVSTEHSSCLAATEEDEGDDDMARSGEADFRFKGYTFSKPFHLIVSYDWLILQGPATSIFEGDTLVLHCRAWQDWPLTQVIFYREGSALGPPGSKSEFSIAVARKSDSGHYHCSGIFRSPGPGSQETASPVAITVQELFAAPVLKALPSSGPQEGGSVTLSCETKLSLQRSASRLLFSFYKDGRSLSSRGISSEFRIPEASEEHSGSYWCEAATEDRQISKQSPELEIRVQALQKPATPETPPPAKAPGPLPLLPTPSDEQPVFSFSDPYLTYRINRLLRQMQDVRILLGHLVMELRNLSAHRKPATTKS.

The N-terminal stretch at 1 to 27 (MKLSCMLIEWALYVCPAVLLATQMSLA) is a signal peptide. 2 Ig-like C2-type domains span residues 77–166 (PFHL…ETAS) and 179–257 (PVLK…RQIS). 2 cysteine pairs are disulfide-bonded: C106–C150 and C199–C247. The disordered stretch occupies residues 272-296 (KPATPETPPPAKAPGPLPLLPTPSD). The span at 276-292 (PETPPPAKAPGPLPLLP) shows a compositional bias: pro residues.

In terms of assembly, monomer or homodimer; disulfide-linked.

It localises to the cytoplasm. Functionally, may be implicated in B-cell differentiation and lymphomagenesis. The chain is Fc receptor-like A (Fcrla) from Rattus norvegicus (Rat).